Reading from the N-terminus, the 401-residue chain is Multidrug resistance protein MdtH (401 aa).

Helical transmembrane passes span 13-33, 34-54, 78-95, 99-116, 139-159, 165-185, 214-234, 243-263, 289-309, 340-360, and 365-385; these read YFLL…FPLI, SIHF…ALGL, MIVT…FIAL, PWIL…GTLF, LLLM…SWLL, FVCW…ALFL, VLTL…FPII, AAVK…LYPI, FPVG…LFYL, LGLA…YDTG, and IPQL…YALH.

The protein belongs to the major facilitator superfamily. DHA1 family. MdtH (TC 2.A.1.2.21) subfamily.

It is found in the cell inner membrane. This is Multidrug resistance protein MdtH from Photorhabdus laumondii subsp. laumondii (strain DSM 15139 / CIP 105565 / TT01) (Photorhabdus luminescens subsp. laumondii).